A 555-amino-acid polypeptide reads, in one-letter code: Cyclin-T1.2 (555 aa).

2 disordered regions span residues 315 to 429 and 505 to 555; these read SYKG…NSSK and PADS…GELV. Low complexity predominate over residues 321–335; that stretch reads KPLSNSSDSPSTRPS. The span at 341-359 shows a compositional bias: basic and acidic residues; that stretch reads KNQKVVEQELMEQRMKEAA. Residues 382–398 are compositionally biased toward low complexity; sequence TSSSASNNSNHQNRSSS. The span at 521–543 shows a compositional bias: pro residues; sequence PDEPSPPVSQILLPPPPPPPILP.

It belongs to the cyclin family. Cyclin C subfamily.

Functionally, regulatory subunit of the cyclin-dependent kinase pair (CDK9/cyclin T) complex, also called positive transcription elongation factor B (P-TEFb), which is proposed to facilitate the transition from abortive to production elongation by phosphorylating the CTD (carboxy-terminal domain) of the large subunit of RNA polymerase II (RNAP II). This chain is Cyclin-T1.2 (cit-1.2), found in Caenorhabditis elegans.